We begin with the raw amino-acid sequence, 594 residues long: Protein wntless (594 aa).

Residues 1–13 are Cytoplasmic-facing; that stretch reads MSGTILENLSGRK. The helical transmembrane segment at 14–34 threads the bilayer; the sequence is LSILVATLLLCQVLCFLLGGL. Over 35-239 the chain is Lumenal; that stretch reads YAPLPAGHVT…AIHQNGGFTQ (205 aa). Asn-58 carries an N-linked (GlcNAc...) asparagine glycan. A helical membrane pass occupies residues 240 to 260; it reads IWLLLKTMLFPFVVGIMIWFW. Topologically, residues 261-270 are cytoplasmic; that stretch reads RRVHLLQRSP. The helical transmembrane segment at 271 to 291 threads the bilayer; it reads ALLEYMLIYLGAALTFLNLPL. Residues 292-311 lie on the Lumenal side of the membrane; it reads EYLSLVYEMPYMLLLSDIRQ. A helical membrane pass occupies residues 312 to 332; it reads GIFYAMLLTFWLVFAGEHMLI. At 333–344 the chain is on the cytoplasmic side; that stretch reads QDAPNKSTIRSR. The chain crosses the membrane as a helical span at residues 345-365; sequence YWKHLSAVVVGCISLFVFDIC. The Lumenal segment spans residues 366–390; that stretch reads ERGVQLRNPFYSIWTTPLGAKVAMT. Residues 391–411 traverse the membrane as a helical segment; sequence FIVLAGVSAAIYFLFLCYMIW. Residues 412-473 lie on the Cytoplasmic side of the membrane; the sequence is KVFRNIGDKR…ANESKGLIYR (62 aa). Residues 474–494 form a helical membrane-spanning segment; the sequence is FKFLMLATLVCAALTVAGFIM. Over 495-514 the chain is Lumenal; it reads GQMAEGQWDWNDNVAIQPTS. A helical membrane pass occupies residues 515-535; it reads AFLTGVYGMWNIYIFALLILY. Residues 536 to 594 are Cytoplasmic-facing; sequence APSHKQWPTMHHSDETTQSNENIVASAASEEIEFSHLPSDSNPSEISSLTSFTRKVAFD. The tract at residues 571-594 is disordered; it reads HLPSDSNPSEISSLTSFTRKVAFD. The segment covering 573-588 has biased composition (polar residues); sequence PSDSNPSEISSLTSFT.

Belongs to the wntless family. In terms of assembly, interacts with wg; in the Golgi. Interacts with Vps35, a component of the retromer complex; wls stability is regulated by Vps35. In terms of tissue distribution, ubiquitously expressed in the wing imaginal disk, increased expression is observed in a stripe at the dorso-ventral boundary and other regions of the wing disk that express wg. Also expresses in the leg imaginal disk. During larval development, expression is seen in both motorneurons and muscle.

The protein localises to the presynaptic cell membrane. It localises to the postsynaptic cell membrane. Its subcellular location is the cell membrane. The protein resides in the endosome membrane. It is found in the endoplasmic reticulum membrane. The protein localises to the golgi apparatus membrane. Functionally, a segment polarity gene required for wingless (wg)-dependent patterning processes, acting in both wg-sending cells and wg-target cells. In non-neuronal cells wls directs wg secretion. The wls traffic loop encompasses the Golgi, the cell surface, an endocytic compartment and a retrograde route leading back to the Golgi, and involves clathrin-mediated endocytosis and the retromer complex (a conserved protein complex consisting of Vps35 and Vps26). In neuronal cells (the larval motorneuron NMJ), the wg signal moves across the synapse via the release of wls-containing exosome-like vesicles. Postsynaptic wls is required for the trafficking of fz2 through the fz2-interacting protein Grip. The chain is Protein wntless from Drosophila melanogaster (Fruit fly).